The following is a 474-amino-acid chain: tRNA-2-methylthio-N(6)-dimethylallyladenosine synthase (474 aa).

Residues 3–120 enclose the MTTase N-terminal domain; that stretch reads KKLHIKTWGC…LPEMLNHVQG (118 aa). Cys12, Cys49, Cys83, Cys157, Cys161, and Cys164 together coordinate [4Fe-4S] cluster. Positions 143–375 constitute a Radical SAM core domain; that stretch reads RAEGPTAFVS…QDRINQQVLQ (233 aa). Residues 378 to 441 form the TRAM domain; the sequence is RRMLGTVQRI…TNSLRGTVVR (64 aa).

The protein belongs to the methylthiotransferase family. MiaB subfamily. In terms of assembly, monomer. [4Fe-4S] cluster is required as a cofactor.

Its subcellular location is the cytoplasm. The catalysed reaction is N(6)-dimethylallyladenosine(37) in tRNA + (sulfur carrier)-SH + AH2 + 2 S-adenosyl-L-methionine = 2-methylsulfanyl-N(6)-dimethylallyladenosine(37) in tRNA + (sulfur carrier)-H + 5'-deoxyadenosine + L-methionine + A + S-adenosyl-L-homocysteine + 2 H(+). Functionally, catalyzes the methylthiolation of N6-(dimethylallyl)adenosine (i(6)A), leading to the formation of 2-methylthio-N6-(dimethylallyl)adenosine (ms(2)i(6)A) at position 37 in tRNAs that read codons beginning with uridine. This is tRNA-2-methylthio-N(6)-dimethylallyladenosine synthase from Serratia proteamaculans (strain 568).